The sequence spans 107 residues: Small ribosomal subunit protein uS10c (107 aa).

It belongs to the universal ribosomal protein uS10 family. In terms of assembly, part of the 30S ribosomal subunit.

The protein localises to the plastid. Its subcellular location is the chloroplast. Its function is as follows. Involved in the binding of tRNA to the ribosomes. The chain is Small ribosomal subunit protein uS10c from Thalassiosira pseudonana (Marine diatom).